Here is a 443-residue protein sequence, read N- to C-terminus: MEQQLKTDGLNLSIRDAVKEDRISELPEDLLLQILSDIPTENVIATSVLSKRWRSLWKMVPNLTFDFTFDPKYHQTFSENLYRSLTSHEASVLESLQLNFTRGIDGLNIGMWIATAYVRHVRKLVLVSFGDVRDKRARFRSALFNFNDTLDILEIQDYILLDLPSPVCLKSLRELRLYEVHFKDEASVCNLLCGCPSLEVLSVHRERNVDVETFTIVVPSLQRLTIYDFCIGGGKGGYVINAPSLKYLNIVGFEGLDFCLIENAPELVEAEISDVSHIANENILESLTSVKRLSLESPIKIKFPTGKVFDQLVYLDVLTKEREWWNLLSRMLESSPKLQILKLTGLSCIEKGLDGQNWNPPKCVPECLLFHLEKFLWTGYEWQRGDEKEVATYILENARLLKKATFSTKRIDLENLEKRREMLNELASVARASDSCHLVFHSI.

In terms of domain architecture, F-box spans 20–68 (EDRISELPEDLLLQILSDIPTENVIATSVLSKRWRSLWKMVPNLTFDFT). LRR repeat units follow at residues 74-100 (HQTF…QLNF), 152-179 (ILEI…RLYE), 180-205 (VHFK…SVHR), 218-252 (VPSL…NIVG), 272-297 (ISDV…SLES), and 320-345 (KERE…KLTG). An FBD domain is found at 357–408 (NWNPPKCVPECLLFHLEKFLWTGYEWQRGDEKEVATYILENARLLKKATFST).

This chain is Putative F-box/FBD/LRR-repeat protein At3g49030, found in Arabidopsis thaliana (Mouse-ear cress).